A 152-amino-acid chain; its full sequence is Cell division protein SepF (152 aa).

Positions 25-54 are disordered; it reads EEREPVQEEKGTKDKAAFQERPQTGKQNVV. Residues 28–42 are compositionally biased toward basic and acidic residues; the sequence is EPVQEEKGTKDKAAF.

Belongs to the SepF family. In terms of assembly, homodimer. Interacts with FtsZ.

It is found in the cytoplasm. In terms of biological role, cell division protein that is part of the divisome complex and is recruited early to the Z-ring. Probably stimulates Z-ring formation, perhaps through the cross-linking of FtsZ protofilaments. Its function overlaps with FtsA. This is Cell division protein SepF from Bacillus pumilus (strain SAFR-032).